The sequence spans 89 residues: MALTQEAKNQIIKEYARHNGDTGSVEVQVAVLTADINELNNHMSENKHDFSSQRGLMKKIGHRRNLLRYLRDIDVARYRTLISKLGLRR.

The protein belongs to the universal ribosomal protein uS15 family. In terms of assembly, part of the 30S ribosomal subunit. Forms a bridge to the 50S subunit in the 70S ribosome, contacting the 23S rRNA.

One of the primary rRNA binding proteins, it binds directly to 16S rRNA where it helps nucleate assembly of the platform of the 30S subunit by binding and bridging several RNA helices of the 16S rRNA. In terms of biological role, forms an intersubunit bridge (bridge B4) with the 23S rRNA of the 50S subunit in the ribosome. In Oenococcus oeni (strain ATCC BAA-331 / PSU-1), this protein is Small ribosomal subunit protein uS15.